A 638-amino-acid chain; its full sequence is Signal recognition particle receptor subunit alpha (638 aa).

Disordered stretches follow at residues 132-244 (APTT…GKKA) and 283-316 (GTGS…TKGT). Composition is skewed to basic and acidic residues over residues 137–146 (KKFEDSEKAK) and 153–165 (IETR…EKAK). Ser-177 carries the phosphoserine modification. Residues 204 to 239 (LSKEELIRRKREEFIQKHGRGMEKSNKSTKSDAPKE) are compositionally biased toward basic and acidic residues. Position 284 is a phosphothreonine (Thr-284). A phosphoserine mark is found at Ser-296, Ser-297, and Ser-298. Positions 304 to 314 (AQNSTKPSATK) are enriched in polar residues. The tract at residues 419-636 (YVVTFCGVNG…NAKAVVAALM (218 aa)) is NG domain. 425-432 (GVNGVGKS) is a binding site for GTP. Ser-473 carries the post-translational modification Phosphoserine. 520–524 (DTAGR) serves as a coordination point for GTP. The residue at position 578 (Thr-578) is a Phosphothreonine. Position 588 to 591 (588 to 591 (TKFD)) interacts with GTP.

The protein belongs to the GTP-binding SRP family. In terms of assembly, heterodimer with SRPRB. Interacts with the signal recognition particle (SRP) complex subunit SRP54. As to quaternary structure, (Microbial infection) May interact with Zika virus strain Mr-766 non-structural protein 4A/NS4A. May interact with Zika virus French Polynesia 10087PF/2013 non-structural protein 4A/NS4A. (Microbial infection) May interact with Dengue virus DENV2 16681 non-structural protein 4A/NS4A.

It localises to the endoplasmic reticulum membrane. Functionally, component of the signal recognition particle (SRP) complex receptor (SR). Ensures, in conjunction with the SRP complex, the correct targeting of the nascent secretory proteins to the endoplasmic reticulum membrane system. Forms a guanosine 5'-triphosphate (GTP)-dependent complex with the SRP subunit SRP54. SRP receptor compaction and GTPase rearrangement drive SRP-mediated cotranslational protein translocation into the ER. In Homo sapiens (Human), this protein is Signal recognition particle receptor subunit alpha.